The primary structure comprises 60 residues: UPF0509 protein Ent638_2183 (60 aa).

This sequence belongs to the UPF0509 family.

This is UPF0509 protein Ent638_2183 from Enterobacter sp. (strain 638).